The following is a 150-amino-acid chain: Arginine repressor (150 aa).

This sequence belongs to the ArgR family.

The protein resides in the cytoplasm. It participates in amino-acid biosynthesis; L-arginine biosynthesis [regulation]. Regulates arginine biosynthesis genes. This is Arginine repressor from Desulforudis audaxviator (strain MP104C).